Reading from the N-terminus, the 246-residue chain is MECVNCDCTVKTMDNLDQAIRALLQRGKHVNRMMDNEKLIREARRMEEVQQLKMQIPKPVDKKPRPPPSENNLKLISCEETCMDETLKNSSKPRMIYNKQLGRAESIDFDVPSLSYESSEKCAGETSPYTSASVSNSKKATSSSNFTKSETTTITELTTSTFKKSNNSSGGALVLDNHYLINNDDGTVKKLPMKVYVKQRLEDGSLDVQLVFFDENSQKVMDISMLVNGKKIRNVQFCGKDAKLVN.

A disordered region spans residues 120 to 149 (EKCAGETSPYTSASVSNSKKATSSSNFTKS). Residues 130–149 (TSASVSNSKKATSSSNFTKS) are compositionally biased toward low complexity.

This is an uncharacterized protein from Caenorhabditis elegans.